The primary structure comprises 131 residues: Histone H2B.2 (131 aa).

The span at Met1–Pro19 shows a compositional bias: basic and acidic residues. The disordered stretch occupies residues Met1–Arg37. Lys7 and Lys8 each carry N6-acetyllysine; alternate. Glycyl lysine isopeptide (Lys-Gly) (interchain with G-Cter in SUMO); alternate cross-links involve residues Lys7 and Lys8. Ser11 carries the phosphoserine modification. Lys12 is subject to N6-acetyllysine. N6-acetyllysine; alternate occurs at positions 17, 18, 22, and 23. Glycyl lysine isopeptide (Lys-Gly) (interchain with G-Cter in SUMO); alternate cross-links involve residues Lys17 and Lys18. An N6-butyryllysine; alternate modification is found at Lys22. Lys23 bears the N6-methyllysine; alternate mark. The residue at position 35 (Lys35) is an N6-succinyllysine. Lys38 is subject to N6,N6-dimethyllysine. N6-succinyllysine is present on Lys47. A Glycyl lysine isopeptide (Lys-Gly) (interchain with G-Cter in ubiquitin) cross-link involves residue Lys124.

It belongs to the histone H2B family. The nucleosome is a histone octamer containing two molecules each of H2A, H2B, H3 and H4 assembled in one H3-H4 heterotetramer and two H2A-H2B heterodimers. The octamer wraps approximately 147 bp of DNA. Interacts with NAP1. In terms of processing, monoubiquitinated by the RAD6/UBC2-BRE1 complex to form H2BK123ub1. H2BK123ub1 gives a specific tag for epigenetic transcriptional activation and is also prerequisite for H3K4me and H3K79me formation. H2BK123ub1 also modulates the formation of double-strand breaks during meiosis and is a prerequisite for DNA-damage checkpoint activation. Deubiquitination is performed by UBP8 in presence of SGF11. Phosphorylated by STE20 to form H2BS10ph during progression through meiotic prophase. May be correlated with chromosome condensation. H2BS10ph is also formed after H(2)O(2) treatment, and is a step leading to apoptosis. Post-translationally, acetylated by GCN5, a component of the SAGA complex, to form H2BK11ac and H2BK16ac. H2BK16ac can also be formed by ESA1, a component of the NuA4 histone acetyltransferase (HAT) complex. Acetylation of N-terminal lysines and particularly formation of H2BK11acK16ac has a positive effect on transcription. In terms of processing, sumoylation to form H2BK6su or H2BK7su, and probably also H2BK16su or H2BK17su, occurs preferentially near the telomeres and represses gene transcription.

It localises to the nucleus. The protein localises to the chromosome. In terms of biological role, core component of nucleosome. Nucleosomes wrap and compact DNA into chromatin, limiting DNA accessibility to the cellular machineries which require DNA as a template. Histones thereby play a central role in transcription regulation, DNA repair, DNA replication and chromosomal stability. DNA accessibility is regulated via a complex set of post-translational modifications of histones, also called histone code, and nucleosome remodeling. In Saccharomyces cerevisiae (strain ATCC 204508 / S288c) (Baker's yeast), this protein is Histone H2B.2 (HTB2).